The following is a 118-amino-acid chain: SPbeta prophage-derived uncharacterized protein YolB (118 aa).

The polypeptide is SPbeta prophage-derived uncharacterized protein YolB (yolB) (Bacillus subtilis (strain 168)).